We begin with the raw amino-acid sequence, 327 residues long: Gonadotropin-releasing hormone receptor (327 aa).

Over 1–38 (MANNASLEQDQNHCSAINNSIPLTQGKLPTLTLSGKIR) the chain is Extracellular. N-linked (GlcNAc...) asparagine glycosylation is found at Asn4 and Asn18. The chain crosses the membrane as a helical span at residues 39–58 (VTVTFFLFLLSTAFNASFLV). At 59 to 77 (KLQRWTQKRKKGKKLSRMK) the chain is on the cytoplasmic side. The helical transmembrane segment at 78 to 97 (VLLKHLTLANLLETLIVMPL) threads the bilayer. At 98–115 (DGMWNITVQWYAGEFLCK) the chain is on the extracellular side. Residue Asn102 is glycosylated (N-linked (GlcNAc...) asparagine). Residues Cys114 and Cys195 are joined by a disulfide bond. Residues 116-137 (VLSYLKLFSMYAPAFMMVVISL) form a helical membrane-spanning segment. Residues 138–164 (DRSLAVTQPLAVQSKSKLERSMTSLAW) are Cytoplasmic-facing. Residues 165–184 (ILSIVFAGPQLYIFRMIYLA) traverse the membrane as a helical segment. Residues 185–211 (DGSGPAVFSQCVTHCSFPQWWHEAFYN) are Extracellular-facing. Residues 212 to 231 (FFTFSCLFIIPLLIMLICNA) traverse the membrane as a helical segment. The Cytoplasmic portion of the chain corresponds to 232–280 (KIIFALTRVLHQDPRKLQLNQSKNNIPRARLRTLKMTVAFGTSFVICWT). A helical transmembrane segment spans residues 281–299 (PYYVLGIWYWFDPEMLNRV). Residues 300–305 (SEPVNH) are Extracellular-facing. Residues 306–325 (FFFLFAFLNPCFDPLIYGYF) traverse the membrane as a helical segment. Residues 326–327 (SL) lie on the Cytoplasmic side of the membrane.

It belongs to the G-protein coupled receptor 1 family.

The protein resides in the cell membrane. Functionally, receptor for gonadotropin releasing hormone (GnRH) that mediates the action of GnRH to stimulate the secretion of the gonadotropic hormones luteinizing hormone (LH) and follicle-stimulating hormone (FSH). This receptor mediates its action by association with G-proteins that activate a phosphatidylinositol-calcium second messenger system. The chain is Gonadotropin-releasing hormone receptor (Gnrhr) from Rattus norvegicus (Rat).